Reading from the N-terminus, the 252-residue chain is Adenosylcobinamide-GDP ribazoletransferase (252 aa).

5 helical membrane-spanning segments follow: residues 33-53 (FISP…VVLL), 105-125 (TGSG…IATL), 132-152 (LWFF…LLGL), 184-204 (FAIL…LLVF), and 215-235 (MSGD…LLVA).

Belongs to the CobS family. Mg(2+) serves as cofactor.

It localises to the cell membrane. The enzyme catalyses alpha-ribazole + adenosylcob(III)inamide-GDP = adenosylcob(III)alamin + GMP + H(+). The catalysed reaction is alpha-ribazole 5'-phosphate + adenosylcob(III)inamide-GDP = adenosylcob(III)alamin 5'-phosphate + GMP + H(+). It participates in cofactor biosynthesis; adenosylcobalamin biosynthesis; adenosylcobalamin from cob(II)yrinate a,c-diamide: step 7/7. Functionally, joins adenosylcobinamide-GDP and alpha-ribazole to generate adenosylcobalamin (Ado-cobalamin). Also synthesizes adenosylcobalamin 5'-phosphate from adenosylcobinamide-GDP and alpha-ribazole 5'-phosphate. The sequence is that of Adenosylcobinamide-GDP ribazoletransferase from Sulfolobus acidocaldarius (strain ATCC 33909 / DSM 639 / JCM 8929 / NBRC 15157 / NCIMB 11770).